Here is a 364-residue protein sequence, read N- to C-terminus: Carbamoyl phosphate synthase pyrimidine-specific small chain (364 aa).

A CPSase region spans residues 1 to 169 (MKRYLVLEDG…AYPNPATGPN (169 aa)). L-glutamine-binding residues include Ser45, Gly217, and Gly219. The 188-residue stretch at 169–356 (NVVVVDFGLK…IDLMAANQAT (188 aa)) folds into the Glutamine amidotransferase type-1 domain. The active-site Nucleophile is the Cys244. L-glutamine-binding residues include Leu245, Gln248, Asn286, Gly288, and Tyr289. Active-site residues include His329 and Asp331.

It belongs to the CarA family. Composed of two chains; the small (or glutamine) chain promotes the hydrolysis of glutamine to ammonia, which is used by the large (or ammonia) chain to synthesize carbamoyl phosphate. Tetramer of heterodimers (alpha,beta)4.

It carries out the reaction hydrogencarbonate + L-glutamine + 2 ATP + H2O = carbamoyl phosphate + L-glutamate + 2 ADP + phosphate + 2 H(+). The catalysed reaction is L-glutamine + H2O = L-glutamate + NH4(+). The protein operates within pyrimidine metabolism; UMP biosynthesis via de novo pathway; (S)-dihydroorotate from bicarbonate: step 1/3. Inhibited by pyrimidine. In terms of biological role, small subunit of the glutamine-dependent carbamoyl phosphate synthetase (CPSase). CPSase catalyzes the formation of carbamoyl phosphate from the ammonia moiety of glutamine, carbonate, and phosphate donated by ATP, constituting the first step of the biosynthetic pathway leading to pyrimidine nucleotides. The small subunit (glutamine amidotransferase) binds and cleaves glutamine to supply the large subunit with the substrate ammonia. The polypeptide is Carbamoyl phosphate synthase pyrimidine-specific small chain (Lactiplantibacillus plantarum (strain ATCC BAA-793 / NCIMB 8826 / WCFS1) (Lactobacillus plantarum)).